The chain runs to 152 residues: Transcriptional regulator MraZ (152 aa).

SpoVT-AbrB domains follow at residues 5–52 (ASAI…PLHE) and 81–124 (AQDC…EESA).

This sequence belongs to the MraZ family. As to quaternary structure, forms oligomers.

It localises to the cytoplasm. The protein localises to the nucleoid. The chain is Transcriptional regulator MraZ from Shewanella frigidimarina (strain NCIMB 400).